We begin with the raw amino-acid sequence, 859 residues long: Envelope glycoprotein gp160 (859 aa).

The signal sequence occupies residues 1 to 24 (MERGRNQLLIAILLASACLIYCRQ). Topologically, residues 25–680 (QYVTVFYGVP…LTSWISYIQY (656 aa)) are extracellular. A glycan (N-linked (GlcNAc...) asparagine; by host) is linked at N38. C45 and C58 are disulfide-bonded. N-linked (GlcNAc...) asparagine; by host glycosylation is found at N71, N115, N148, N163, N176, N188, N195, N205, N237, N247, N271, N277, N288, N299, N309, N343, N366, N398, N411, N448, N463, and N467. Disulfide bonds link C102/C213, C109/C204, C114/C160, C226/C256, and C236/C248. Residues 114–159 (CNISTSDTTMIRTTTPSTAKEAPISDNSPCIRTNNCSGLEEEKIVK) form a V1 region. Residues 160 to 204 (CHFNMTGLERDKKKQYNETWYSSDVVCDNSTDQTTNETTCYMNHC) are V2. Residues 304–337 (CRRPGNKTVVPITLMSGQRFHSRPIINKRPRQAW) form a V3 region. A disulfide bridge links C304 with C338. 2 disulfides stabilise this stretch: C390-C447 and C397-C420. A V4 region spans residues 397-420 (CNMTWFLNWVENKPNTTKRNYAPC). The segment at 463-470 (NQTTNITF) is V5. The interval 513–533 (GAFVLGFLGFLTTAGVAMGTA) is fusion peptide. The segment at 576-592 (LQARVTAIEKYLKDQAQ) is immunosuppression. N612, N621, and N637 each carry an N-linked (GlcNAc...) asparagine; by host glycan. Positions 625–646 (QEWEQKVRYLEANISQSLEEAQ) form a coiled coil. Residues 658–679 (KLNNWDVFTNWFDLTSWISYIQ) form an MPER; binding to GalCer region. A helical transmembrane segment spans residues 681–701 (GVYIVVGIIVLRIVIYVVQML). At 702–859 (SRLRKGYRPV…IRQGAELALL (158 aa)) the chain is on the cytoplasmic side. A YXXV motif; contains endocytosis signal motif is present at residues 708–711 (YRPV). The interval 726–745 (KDPEQPASEETEEDVGGNGG) is disordered. Residue C774 is the site of S-palmitoyl cysteine; by host attachment. Positions 858–859 (LL) match the Di-leucine internalization motif motif.

As to quaternary structure, the mature envelope protein (Env) consists of a homotrimer of non-covalently associated gp120-gp41 heterodimers. The resulting complex protrudes from the virus surface as a spike. There seems to be as few as 10 spikes on the average virion. Interacts with human CD4, CCR5 and CXCR4, to form a P4HB/PDI-CD4-CXCR4-gp120 complex. Gp120 also interacts with the C-type lectins CD209/DC-SIGN and CLEC4M/DC-SIGNR (collectively referred to as DC-SIGN(R)). Gp120 and gp41 interact with GalCer. The mature envelope protein (Env) consists of a homotrimer of non-covalently associated gp120-gp41 heterodimers. The resulting complex protrudes from the virus surface as a spike. There seems to be as few as 10 spikes on the average virion. Specific enzymatic cleavages in vivo yield mature proteins. Envelope glycoproteins are synthesized as an inactive precursor that is heavily N-glycosylated and processed likely by host cell furin in the Golgi to yield the mature SU and TM proteins. The cleavage site between SU and TM requires the minimal sequence [KR]-X-[KR]-R. In terms of processing, palmitoylation of the transmembrane protein and of Env polyprotein (prior to its proteolytic cleavage) is essential for their association with host cell membrane lipid rafts. Palmitoylation is therefore required for envelope trafficking to classical lipid rafts, but not for viral replication.

The protein resides in the virion membrane. It is found in the host cell membrane. The protein localises to the host endosome membrane. Functionally, the surface protein gp120 (SU) attaches the virus to the host lymphoid cell by binding to the primary receptor CD4. This interaction induces a structural rearrangement creating a high affinity binding site for a chemokine coreceptor like CXCR4 and/or CCR5. This peculiar 2 stage receptor-interaction strategy allows gp120 to maintain the highly conserved coreceptor-binding site in a cryptic conformation, protected from neutralizing antibodies. Since CD4 also displays a binding site for the disulfide-isomerase P4HB/PDI, a P4HB/PDI-CD4-CXCR4-gp120 complex may form. In that complex, P4HB/PDI could reach and reduce gp120 disulfide bonds, causing major conformational changes in gp120. TXN, another PDI family member could also be involved in disulfide rearrangements in Env during fusion. These changes are transmitted to the transmembrane protein gp41 and are thought to activate its fusogenic potential by unmasking its fusion peptide. The surface protein gp120 is a ligand for CD209/DC-SIGN and CLEC4M/DC-SIGNR, which are respectively found on dendritic cells (DCs), and on endothelial cells of liver sinusoids and lymph node sinuses. These interactions allow capture of viral particles at mucosal surfaces by these cells and subsequent transmission to permissive cells. DCs are professional antigen presenting cells, critical for host immunity by inducing specific immune responses against a broad variety of pathogens. They act as sentinels in various tissues where they take up antigen, process it, and present it to T-cells following migration to lymphoid organs. HIV subverts the migration properties of dendritic cells to gain access to CD4+ T-cells in lymph nodes. Virus transmission to permissive T-cells occurs either in trans (without DCs infection, through viral capture and transmission), or in cis (following DCs productive infection, through the usual CD4-gp120 interaction), thereby inducing a robust infection. In trans infection, bound virions remain infectious over days and it is proposed that they are not degraded, but protected in non-lysosomal acidic organelles within the DCs close to the cell membrane thus contributing to the viral infectious potential during DCs' migration from the periphery to the lymphoid tissues. On arrival at lymphoid tissues, intact virions recycle back to DCs' cell surface allowing virus transmission to CD4+ T-cells. Virion capture also seems to lead to MHC-II-restricted viral antigen presentation, and probably to the activation of HIV-specific CD4+ cells. In terms of biological role, the transmembrane protein gp41 (TM) acts as a class I viral fusion protein. Under the current model, the protein has at least 3 conformational states: pre-fusion native state, pre-hairpin intermediate state, and post-fusion hairpin state. During fusion of viral and target intracellular membranes, the coiled coil regions (heptad repeats) assume a trimer-of-hairpins structure, positioning the fusion peptide in close proximity to the C-terminal region of the ectodomain. The formation of this structure appears to drive apposition and subsequent fusion of viral and target cell membranes. Complete fusion occurs in host cell endosomes and is dynamin-dependent, however some lipid transfer might occur at the plasma membrane. The virus undergoes clathrin-dependent internalization long before endosomal fusion, thus minimizing the surface exposure of conserved viral epitopes during fusion and reducing the efficacy of inhibitors targeting these epitopes. Membranes fusion leads to delivery of the nucleocapsid into the cytoplasm. Its function is as follows. The envelope glycoprotein gp160 precursor down-modulates cell surface CD4 antigen by interacting with it in the endoplasmic reticulum and blocking its transport to the cell surface. Functionally, the gp120-gp41 heterodimer seems to contribute to T-cell depletion during HIV-1 infection. The envelope glycoproteins expressed on the surface of infected cells induce apoptosis through an interaction with uninfected cells expressing the receptor (CD4) and the coreceptors CXCR4 or CCR5. This type of bystander killing may be obtained by at least three distinct mechanisms. First, the interaction between the 2 cells can induce cellular fusion followed by nuclear fusion within the syncytium. Syncytia are condemned to die from apoptosis. Second, the 2 interacting cells may not fuse entirely and simply exchange plasma membrane lipids, after a sort of hemifusion process, followed by rapid death. Third, it is possible that virus-infected cells, on the point of undergoing apoptosis, fuse with CD4-expressing cells, in which case apoptosis is rapidly transmitted from one cell to the other and thus occurs in a sort of contagious fashion. The gp120-gp41 heterodimer allows rapid transcytosis of the virus through CD4 negative cells such as simple epithelial monolayers of the intestinal, rectal and endocervical epithelial barriers. Both gp120 and gp41 specifically recognize glycosphingolipids galactosyl-ceramide (GalCer) or 3' sulfo-galactosyl-ceramide (GalS) present in the lipid rafts structures of epithelial cells. Binding to these alternative receptors allows the rapid transcytosis of the virus through the epithelial cells. This transcytotic vesicle-mediated transport of virions from the apical side to the basolateral side of the epithelial cells does not involve infection of the cells themselves. The chain is Envelope glycoprotein gp160 (env) from Human immunodeficiency virus type 2 subtype A (isolate CAM2) (HIV-2).